The chain runs to 127 residues: uncharacterized protein (127 aa).

The next 2 helical transmembrane spans lie at 64 to 84 and 101 to 118; these read GYYITNLICIVVGLFLYFGYL and FFHFFFTILAVTSRAIYY.

The protein resides in the membrane. This is an uncharacterized protein from Saccharomyces cerevisiae (strain ATCC 204508 / S288c) (Baker's yeast).